An 862-amino-acid polypeptide reads, in one-letter code: Eukaryotic translation initiation factor 3 subunit C (862 aa).

The segment at 1 to 81 (MSSRFFYGGG…EEEEKVTVVK (81 aa)) is disordered. Residues 17-54 (SSDEEELYSDREEEEKSEEEESSEEEDETSEEEESDEE) show a composition bias toward acidic residues. Over residues 55–65 (TGARKFLKDVA) the composition is skewed to basic and acidic residues. The span at 66–75 (SDSEEEEEEE) shows a compositional bias: acidic residues. Residues 600 to 774 (FHMHINLELL…NAIVFRKGVE (175 aa)) form the PCI domain. The disordered stretch occupies residues 813–862 (RDQGAGARGGRGSGRGGQARGGPRFPGGQQGRRPGGQQFGGGALGGAIKA). Positions 818–862 (GARGGRGSGRGGQARGGPRFPGGQQGRRPGGQQFGGGALGGAIKA) are enriched in gly residues.

It belongs to the eIF-3 subunit C family. Component of the eukaryotic translation initiation factor 3 (eIF-3) complex.

It is found in the cytoplasm. In terms of biological role, component of the eukaryotic translation initiation factor 3 (eIF-3) complex, which is involved in protein synthesis of a specialized repertoire of mRNAs and, together with other initiation factors, stimulates binding of mRNA and methionyl-tRNAi to the 40S ribosome. The eIF-3 complex specifically targets and initiates translation of a subset of mRNAs involved in cell proliferation. This Aspergillus fumigatus (strain CBS 144.89 / FGSC A1163 / CEA10) (Neosartorya fumigata) protein is Eukaryotic translation initiation factor 3 subunit C (nip1).